We begin with the raw amino-acid sequence, 351 residues long: Photosystem II D2 protein (351 aa).

A helical membrane pass occupies residues 39–59; it reads CSYLALGAWFTGTTFVTSWYT. Histidine 116 is a binding site for chlorophyll a. A helical transmembrane segment spans residues 123–139; it reads GFCLRQFEIARLVGIRP. Pheophytin a contacts are provided by glutamine 128 and asparagine 141. The chain crosses the membrane as a helical span at residues 151 to 164; the sequence is VFVSVFLIYPLGQA. Residue histidine 196 coordinates chlorophyll a. A helical transmembrane segment spans residues 206–226; the sequence is GALLCAIHGATVENTLFEDGE. Histidine 213 and phenylalanine 260 together coordinate a plastoquinone. Residue histidine 213 coordinates Fe cation. Position 267 (histidine 267) interacts with Fe cation. Residues 277-293 form a helical membrane-spanning segment; sequence GLWTSSIGIIGLALNLR.

It belongs to the reaction center PufL/M/PsbA/D family. As to quaternary structure, PSII is composed of 1 copy each of membrane proteins PsbA, PsbB, PsbC, PsbD, PsbE, PsbF, PsbH, PsbI, PsbJ, PsbK, PsbL, PsbM, PsbT, PsbY, PsbZ, Psb30/Ycf12, at least 3 peripheral proteins of the oxygen-evolving complex and a large number of cofactors. It forms dimeric complexes. Requires The D1/D2 heterodimer binds P680, chlorophylls that are the primary electron donor of PSII, and subsequent electron acceptors. It shares a non-heme iron and each subunit binds pheophytin, quinone, additional chlorophylls, carotenoids and lipids. There is also a Cl(-1) ion associated with D1 and D2, which is required for oxygen evolution. The PSII complex binds additional chlorophylls, carotenoids and specific lipids. as cofactor.

The protein resides in the plastid. It is found in the chloroplast thylakoid membrane. The catalysed reaction is 2 a plastoquinone + 4 hnu + 2 H2O = 2 a plastoquinol + O2. Functionally, photosystem II (PSII) is a light-driven water:plastoquinone oxidoreductase that uses light energy to abstract electrons from H(2)O, generating O(2) and a proton gradient subsequently used for ATP formation. It consists of a core antenna complex that captures photons, and an electron transfer chain that converts photonic excitation into a charge separation. The D1/D2 (PsbA/PsbD) reaction center heterodimer binds P680, the primary electron donor of PSII as well as several subsequent electron acceptors. D2 is needed for assembly of a stable PSII complex. This chain is Photosystem II D2 protein, found in Galdieria sulphuraria (Red alga).